Reading from the N-terminus, the 313-residue chain is Acetyl-coenzyme A carboxylase carboxyl transferase subunit beta, chloroplastic (313 aa).

In terms of domain architecture, CoA carboxyltransferase N-terminal spans 47 to 313 (LWTRCDNCEN…SAPCRRSNNS (267 aa)). Residues Cys51, Cys54, Cys70, and Cys73 each contribute to the Zn(2+) site. A C4-type zinc finger spans residues 51 to 73 (CDNCENMLYIRFLRQNKRICEEC).

The protein belongs to the AccD/PCCB family. In terms of assembly, acetyl-CoA carboxylase is a heterohexamer composed of biotin carboxyl carrier protein, biotin carboxylase and 2 subunits each of ACCase subunit alpha and ACCase plastid-coded subunit beta (accD). Zn(2+) is required as a cofactor.

The protein resides in the plastid. Its subcellular location is the chloroplast stroma. It carries out the reaction N(6)-carboxybiotinyl-L-lysyl-[protein] + acetyl-CoA = N(6)-biotinyl-L-lysyl-[protein] + malonyl-CoA. Its pathway is lipid metabolism; malonyl-CoA biosynthesis; malonyl-CoA from acetyl-CoA: step 1/1. Component of the acetyl coenzyme A carboxylase (ACC) complex. Biotin carboxylase (BC) catalyzes the carboxylation of biotin on its carrier protein (BCCP) and then the CO(2) group is transferred by the transcarboxylase to acetyl-CoA to form malonyl-CoA. This chain is Acetyl-coenzyme A carboxylase carboxyl transferase subunit beta, chloroplastic, found in Anthoceros angustus (Hornwort).